Consider the following 355-residue polypeptide: Holliday junction branch migration complex subunit RuvB (355 aa).

The segment at 4-190 (TDKLAAERII…FGIVARLEFY (187 aa)) is large ATPase domain (RuvB-L). ATP contacts are provided by residues Leu-29, Arg-30, Gly-71, Lys-74, Thr-75, Thr-76, 137–139 (EDY), Arg-180, Tyr-190, and Arg-227. Thr-75 is a binding site for Mg(2+). The tract at residues 191–261 (DAEQLSRIVR…VADAALAMLD (71 aa)) is small ATPAse domain (RuvB-S). The head domain (RuvB-H) stretch occupies residues 264-355 (PVGFDLMDRK…GSMWNTPDGA (92 aa)). DNA is bound by residues Arg-300, Arg-319, and Arg-324.

This sequence belongs to the RuvB family. As to quaternary structure, homohexamer. Forms an RuvA(8)-RuvB(12)-Holliday junction (HJ) complex. HJ DNA is sandwiched between 2 RuvA tetramers; dsDNA enters through RuvA and exits via RuvB. An RuvB hexamer assembles on each DNA strand where it exits the tetramer. Each RuvB hexamer is contacted by two RuvA subunits (via domain III) on 2 adjacent RuvB subunits; this complex drives branch migration. In the full resolvosome a probable DNA-RuvA(4)-RuvB(12)-RuvC(2) complex forms which resolves the HJ.

The protein localises to the cytoplasm. The enzyme catalyses ATP + H2O = ADP + phosphate + H(+). Functionally, the RuvA-RuvB-RuvC complex processes Holliday junction (HJ) DNA during genetic recombination and DNA repair, while the RuvA-RuvB complex plays an important role in the rescue of blocked DNA replication forks via replication fork reversal (RFR). RuvA specifically binds to HJ cruciform DNA, conferring on it an open structure. The RuvB hexamer acts as an ATP-dependent pump, pulling dsDNA into and through the RuvAB complex. RuvB forms 2 homohexamers on either side of HJ DNA bound by 1 or 2 RuvA tetramers; 4 subunits per hexamer contact DNA at a time. Coordinated motions by a converter formed by DNA-disengaged RuvB subunits stimulates ATP hydrolysis and nucleotide exchange. Immobilization of the converter enables RuvB to convert the ATP-contained energy into a lever motion, pulling 2 nucleotides of DNA out of the RuvA tetramer per ATP hydrolyzed, thus driving DNA branch migration. The RuvB motors rotate together with the DNA substrate, which together with the progressing nucleotide cycle form the mechanistic basis for DNA recombination by continuous HJ branch migration. Branch migration allows RuvC to scan DNA until it finds its consensus sequence, where it cleaves and resolves cruciform DNA. The chain is Holliday junction branch migration complex subunit RuvB from Burkholderia vietnamiensis (strain G4 / LMG 22486) (Burkholderia cepacia (strain R1808)).